The primary structure comprises 447 residues: Ion-translocating oxidoreductase complex subunit C (447 aa).

4Fe-4S ferredoxin-type domains are found at residues 359–389 (AEVL…GRIA) and 399–430 (RCRE…LIRY). 8 residues coordinate [4Fe-4S] cluster: cysteine 369, cysteine 372, cysteine 375, cysteine 379, cysteine 408, cysteine 411, cysteine 414, and cysteine 418.

Belongs to the 4Fe4S bacterial-type ferredoxin family. RnfC subfamily. As to quaternary structure, the Rnf complex is probably composed of eight subunits, including RnfA, RnfB, RnfC, RnfD, RnfE and RnfG. It depends on [4Fe-4S] cluster as a cofactor.

It localises to the cell membrane. Functionally, part of a membrane-bound complex that couples electron transfer with translocation of ions across the membrane. Catalyzes Na(+) transport, most probably coupled to electron transfer from reduced ferredoxin to methanophenazine and heterodisulfide reductase. Involved in heterodisulfide reduction during methanogenesis from acetate. The polypeptide is Ion-translocating oxidoreductase complex subunit C (Methanosarcina acetivorans (strain ATCC 35395 / DSM 2834 / JCM 12185 / C2A)).